Here is a 121-residue protein sequence, read N- to C-terminus: Small ribosomal subunit protein bS6 (121 aa).

The disordered stretch occupies residues 96 to 121; sequence DTGPSSMMKTVEREDARKTQQAEYQA. Basic and acidic residues predominate over residues 105 to 115; the sequence is TVEREDARKTQ.

This sequence belongs to the bacterial ribosomal protein bS6 family.

In terms of biological role, binds together with bS18 to 16S ribosomal RNA. In Albidiferax ferrireducens (strain ATCC BAA-621 / DSM 15236 / T118) (Rhodoferax ferrireducens), this protein is Small ribosomal subunit protein bS6.